A 226-amino-acid polypeptide reads, in one-letter code: Ribonuclease 3 (226 aa).

An RNase III domain is found at 6-128; the sequence is TNRLQKKLGY…LIGGVFLDSD (123 aa). Residue Glu41 participates in Mg(2+) binding. The active site involves Asp45. Asp114 and Glu117 together coordinate Mg(2+). Glu117 is a catalytic residue. Positions 155-225 constitute a DRBM domain; it reads DPKTRLQEYL…AEQALKLLEL (71 aa).

Belongs to the ribonuclease III family. As to quaternary structure, homodimer. It depends on Mg(2+) as a cofactor.

The protein localises to the cytoplasm. The catalysed reaction is Endonucleolytic cleavage to 5'-phosphomonoester.. In terms of biological role, digests double-stranded RNA. Involved in the processing of primary rRNA transcript to yield the immediate precursors to the large and small rRNAs (23S and 16S). Processes some mRNAs, and tRNAs when they are encoded in the rRNA operon. Processes pre-crRNA and tracrRNA of type II CRISPR loci if present in the organism. This is Ribonuclease 3 from Sodalis glossinidius (strain morsitans).